The sequence spans 85 residues: ATP synthase subunit c (85 aa).

A run of 2 helical transmembrane segments spans residues 22 to 39 (AIGA…IGKI) and 65 to 85 (AALI…VFFL).

It belongs to the ATPase C chain family. As to quaternary structure, F-type ATPases have 2 components, F(1) - the catalytic core - and F(0) - the membrane proton channel. F(1) has five subunits: alpha(3), beta(3), gamma(1), delta(1), epsilon(1). F(0) has three main subunits: a(1), b(2) and c(10-14). The alpha and beta chains form an alternating ring which encloses part of the gamma chain. F(1) is attached to F(0) by a central stalk formed by the gamma and epsilon chains, while a peripheral stalk is formed by the delta and b chains.

It is found in the cell inner membrane. Its function is as follows. F(1)F(0) ATP synthase produces ATP from ADP in the presence of a proton or sodium gradient. F-type ATPases consist of two structural domains, F(1) containing the extramembraneous catalytic core and F(0) containing the membrane proton channel, linked together by a central stalk and a peripheral stalk. During catalysis, ATP synthesis in the catalytic domain of F(1) is coupled via a rotary mechanism of the central stalk subunits to proton translocation. Functionally, key component of the F(0) channel; it plays a direct role in translocation across the membrane. A homomeric c-ring of between 10-14 subunits forms the central stalk rotor element with the F(1) delta and epsilon subunits. The sequence is that of ATP synthase subunit c from Bacteroides thetaiotaomicron (strain ATCC 29148 / DSM 2079 / JCM 5827 / CCUG 10774 / NCTC 10582 / VPI-5482 / E50).